Consider the following 612-residue polypeptide: Sulfite reductase [NADPH] flavoprotein alpha-component (612 aa).

The region spanning 64–202 (VTLISASQTG…QAQQWRQQVV (139 aa)) is the Flavodoxin-like domain. FMN is bound by residues 70–75 (SQTGNA), 117–120 (STQG), and 153–162 (LGDTSYEHFC). One can recognise an FAD-binding FR-type domain in the interval 247-461 (TAPLTAQLSV…IEHNDNFRLP (215 aa)). Residues T335, K369, 399–402 (RLYS), 417–419 (TVG), Y423, and 432–435 (GGAS) each bind FAD. NADP(+) is bound by residues 532–533 (SR), 538–542 (KIYVQ), and D574. Y612 lines the FAD pocket.

Belongs to the NADPH-dependent sulphite reductase flavoprotein subunit CysJ family. This sequence in the N-terminal section; belongs to the flavodoxin family. The protein in the C-terminal section; belongs to the flavoprotein pyridine nucleotide cytochrome reductase family. Alpha(8)-beta(8). The alpha component is a flavoprotein, the beta component is a hemoprotein. FAD is required as a cofactor. The cofactor is FMN.

It carries out the reaction hydrogen sulfide + 3 NADP(+) + 3 H2O = sulfite + 3 NADPH + 4 H(+). It functions in the pathway sulfur metabolism; hydrogen sulfide biosynthesis; hydrogen sulfide from sulfite (NADPH route): step 1/1. Its function is as follows. Component of the sulfite reductase complex that catalyzes the 6-electron reduction of sulfite to sulfide. This is one of several activities required for the biosynthesis of L-cysteine from sulfate. The flavoprotein component catalyzes the electron flow from NADPH -&gt; FAD -&gt; FMN to the hemoprotein component. This is Sulfite reductase [NADPH] flavoprotein alpha-component from Yersinia pseudotuberculosis serotype O:1b (strain IP 31758).